The chain runs to 880 residues: Alanine--tRNA ligase (880 aa).

Residues histidine 566, histidine 570, cysteine 668, and histidine 672 each coordinate Zn(2+).

Belongs to the class-II aminoacyl-tRNA synthetase family. Zn(2+) serves as cofactor.

The protein resides in the cytoplasm. It catalyses the reaction tRNA(Ala) + L-alanine + ATP = L-alanyl-tRNA(Ala) + AMP + diphosphate. Catalyzes the attachment of alanine to tRNA(Ala) in a two-step reaction: alanine is first activated by ATP to form Ala-AMP and then transferred to the acceptor end of tRNA(Ala). Also edits incorrectly charged Ser-tRNA(Ala) and Gly-tRNA(Ala) via its editing domain. In Acetivibrio thermocellus (strain ATCC 27405 / DSM 1237 / JCM 9322 / NBRC 103400 / NCIMB 10682 / NRRL B-4536 / VPI 7372) (Clostridium thermocellum), this protein is Alanine--tRNA ligase.